Reading from the N-terminus, the 502-residue chain is Glycerol kinase (502 aa).

Position 14 (Thr14) interacts with ADP. Residues Thr14, Thr15, and Ser16 each contribute to the ATP site. Thr14 serves as a coordination point for sn-glycerol 3-phosphate. Arg18 lines the ADP pocket. The sn-glycerol 3-phosphate site is built by Arg84, Glu85, Tyr137, and Asp247. Residues Arg84, Glu85, Tyr137, Asp247, and Gln248 each contribute to the glycerol site. Residues Thr269 and Gly312 each coordinate ADP. Positions 269, 312, 316, and 413 each coordinate ATP. Residues Gly413 and Asn417 each coordinate ADP.

It belongs to the FGGY kinase family. In terms of assembly, homotetramer and homodimer (in equilibrium). Heterodimer with EIIA-Glc. Binds 1 zinc ion per glycerol kinase EIIA-Glc dimer. The zinc ion is important for dimerization.

The catalysed reaction is glycerol + ATP = sn-glycerol 3-phosphate + ADP + H(+). It participates in polyol metabolism; glycerol degradation via glycerol kinase pathway; sn-glycerol 3-phosphate from glycerol: step 1/1. Its activity is regulated as follows. Activity of this regulatory enzyme is affected by several metabolites. Allosterically and non-competitively inhibited by fructose 1,6-bisphosphate (FBP) and unphosphorylated phosphocarrier protein EIIA-Glc (III-Glc), an integral component of the bacterial phosphotransferase (PTS) system. Functionally, key enzyme in the regulation of glycerol uptake and metabolism. Catalyzes the phosphorylation of glycerol to yield sn-glycerol 3-phosphate. The protein is Glycerol kinase of Photorhabdus laumondii subsp. laumondii (strain DSM 15139 / CIP 105565 / TT01) (Photorhabdus luminescens subsp. laumondii).